The chain runs to 84 residues: Small ribosomal subunit protein uS17 (84 aa).

It belongs to the universal ribosomal protein uS17 family. As to quaternary structure, part of the 30S ribosomal subunit.

Its function is as follows. One of the primary rRNA binding proteins, it binds specifically to the 5'-end of 16S ribosomal RNA. The chain is Small ribosomal subunit protein uS17 from Borreliella afzelii (strain PKo) (Borrelia afzelii).